The chain runs to 59 residues: Large ribosomal subunit protein bL32 (59 aa).

A disordered region spans residues M1–D59. 2 stretches are compositionally biased toward basic residues: residues S9–H19 and R49–D59.

The protein belongs to the bacterial ribosomal protein bL32 family.

The sequence is that of Large ribosomal subunit protein bL32 from Cupriavidus metallidurans (strain ATCC 43123 / DSM 2839 / NBRC 102507 / CH34) (Ralstonia metallidurans).